Here is a 252-residue protein sequence, read N- to C-terminus: ATP synthase subunit a (252 aa).

6 helical membrane passes run 29 to 49, 87 to 107, 117 to 137, 146 to 166, 188 to 208, and 211 to 231; these read FTNSALFMVATVVVAAAFLFL, FFPLVFSLFMFVLVANLLGLF, IIVTFGLAILVIGTVIVYGFM, LFVPKGVPLVMMVLVVPIEVI, ITLKVFSGFVVSLSALGAVGV, and SILPLAMAVALTALELLVAFL.

The protein belongs to the ATPase A chain family. F-type ATPases have 2 components, CF(1) - the catalytic core - and CF(0) - the membrane proton channel. CF(1) has five subunits: alpha(3), beta(3), gamma(1), delta(1), epsilon(1). CF(0) has three main subunits: a(1), b(2) and c(9-12). The alpha and beta chains form an alternating ring which encloses part of the gamma chain. CF(1) is attached to CF(0) by a central stalk formed by the gamma and epsilon chains, while a peripheral stalk is formed by the delta and b chains.

Its subcellular location is the cell inner membrane. Its function is as follows. Key component of the proton channel; it plays a direct role in the translocation of protons across the membrane. This Mesorhizobium japonicum (strain LMG 29417 / CECT 9101 / MAFF 303099) (Mesorhizobium loti (strain MAFF 303099)) protein is ATP synthase subunit a.